The sequence spans 127 residues: MAKATAKKRKVIVESTGEAHISSTFNNIIISLTNKKGEVIAWSSAGKMGFRGSKKNTPYAAQMAAEDCSKVALEAGLKKVKVYVKGPGNGRESAIRSIHNGGIEVTEIIDVTPMPHNGCRPPKRRRV.

It belongs to the universal ribosomal protein uS11 family. Part of the 30S ribosomal subunit. Interacts with proteins S7 and S18. Binds to IF-3.

Located on the platform of the 30S subunit, it bridges several disparate RNA helices of the 16S rRNA. Forms part of the Shine-Dalgarno cleft in the 70S ribosome. This Flavobacterium johnsoniae (strain ATCC 17061 / DSM 2064 / JCM 8514 / BCRC 14874 / CCUG 350202 / NBRC 14942 / NCIMB 11054 / UW101) (Cytophaga johnsonae) protein is Small ribosomal subunit protein uS11.